A 136-amino-acid polypeptide reads, in one-letter code: Probable disulfide formation protein (136 aa).

A helical transmembrane segment spans residues 7 to 26 (NNALYFAWLICSTGTVMSIY). Cysteines 36 and 39 form a disulfide. 2 helical membrane passes run 41–60 (YQRI…TYRE) and 67–84 (YALP…YQIC). Cysteine 96 and cysteine 101 form a disulfide bridge. The helical transmembrane segment at 109–133 (GFITVPMASALAFCAISCLLILSGS) threads the bilayer.

It belongs to the DsbB family. BdbC subfamily.

The protein resides in the cell inner membrane. Functionally, required for disulfide bond formation in some proteins. The polypeptide is Probable disulfide formation protein (Chlamydia caviae (strain ATCC VR-813 / DSM 19441 / 03DC25 / GPIC) (Chlamydophila caviae)).